The chain runs to 93 residues: Peptidyl-prolyl cis-trans isomerase C (93 aa).

A PpiC domain is found at 2 to 91 (AKTAAALHIL…FGYHIIKVLY (90 aa)).

It belongs to the PpiC/parvulin rotamase family.

Its subcellular location is the cytoplasm. The catalysed reaction is [protein]-peptidylproline (omega=180) = [protein]-peptidylproline (omega=0). Its activity is regulated as follows. Not inhibited by cyclosporin A or FK506. Functionally, PPIases accelerate the folding of proteins. It prefers amino acid residues with hydrophobic side chains like leucine and phenylalanine in the P1 position of the peptides substrates. This is Peptidyl-prolyl cis-trans isomerase C (ppiC) from Escherichia coli (strain K12).